The sequence spans 194 residues: 21 kDa hemolysin (194 aa).

An N-terminal signal peptide occupies residues 1 to 19 (MRTRSRSTVRPLWPPPSPA). BON domains follow at residues 49-118 (DDEV…RTGE) and 127-194 (IDSW…NYVQ).

Its subcellular location is the periplasm. In Actinobacillus pleuropneumoniae (Haemophilus pleuropneumoniae), this protein is 21 kDa hemolysin (hly).